A 316-amino-acid polypeptide reads, in one-letter code: UDP-N-acetylglucosamine transporter yea4 (316 aa).

Over 1-3 (MIA) the chain is Cytoplasmic. The helical transmembrane segment at 4-24 (SALSFIFGGCCSNAYALEALV) threads the bilayer. Residues 25-31 (REFPSSG) are Lumenal-facing. A helical membrane pass occupies residues 32-52 (ILITFSQFILITIEGLIYFLL). Topologically, residues 53–67 (NDVQSLKHPKVPRKR) are cytoplasmic. Residues 68-88 (WFVVVVMFFAINVLNNVALGF) traverse the membrane as a helical segment. Residues 89–120 (DISVPVHIILRSSGPLTTMAVGRILAGKRYSS) are Lumenal-facing. A helical membrane pass occupies residues 121 to 141 (LQIGSVFILTIGVIIATLGNA). The Cytoplasmic segment spans residues 142–153 (KDLHLHVESMTR). The helical transmembrane segment at 154–174 (FGIGFTILVITQILGAIMGLV) threads the bilayer. Residues 175 to 187 (LENTYRIYGSDWR) are Lumenal-facing. A helical transmembrane segment spans residues 188-208 (ESLFYTHALSLPFFLFLLRPI). Topologically, residues 209–214 (RSQWND) are cytoplasmic. Residues 215–235 (LFAIHTKGFLNLPSGVWYLCF) form a helical membrane-spanning segment. Over 236–274 (NTLAQYFCVRGVNALGAETSALTVSVVLNVRKFVSLCLS) the chain is Lumenal. A helical transmembrane segment spans residues 275-295 (LILFENEMGPAVKFGALLVFG). The Cytoplasmic portion of the chain corresponds to 296-316 (SSAVYASARSKPKTNGLKKND).

This sequence belongs to the nucleotide-sugar transporter family. SLC35B subfamily.

Its subcellular location is the endoplasmic reticulum. The protein resides in the endoplasmic reticulum membrane. Its function is as follows. Sugar transporter that specifically mediates the transport of UDP-N-acetylglucosamine (UDP-GlcNAc) and is required for cell wall chitin synthesis. The chain is UDP-N-acetylglucosamine transporter yea4 (yea4) from Schizosaccharomyces pombe (strain 972 / ATCC 24843) (Fission yeast).